The primary structure comprises 413 residues: Serine hydroxymethyltransferase (413 aa).

(6S)-5,6,7,8-tetrahydrofolate contacts are provided by residues Leu-116 and 120-122 (GHL). Lys-225 carries the N6-(pyridoxal phosphate)lysine modification. (6S)-5,6,7,8-tetrahydrofolate is bound at residue 349–351 (SPF).

This sequence belongs to the SHMT family. Homodimer. Pyridoxal 5'-phosphate serves as cofactor.

The protein localises to the cytoplasm. It catalyses the reaction (6R)-5,10-methylene-5,6,7,8-tetrahydrofolate + glycine + H2O = (6S)-5,6,7,8-tetrahydrofolate + L-serine. Its pathway is one-carbon metabolism; tetrahydrofolate interconversion. It functions in the pathway amino-acid biosynthesis; glycine biosynthesis; glycine from L-serine: step 1/1. In terms of biological role, catalyzes the reversible interconversion of serine and glycine with tetrahydrofolate (THF) serving as the one-carbon carrier. This reaction serves as the major source of one-carbon groups required for the biosynthesis of purines, thymidylate, methionine, and other important biomolecules. Also exhibits THF-independent aldolase activity toward beta-hydroxyamino acids, producing glycine and aldehydes, via a retro-aldol mechanism. In Levilactobacillus brevis (strain ATCC 367 / BCRC 12310 / CIP 105137 / JCM 1170 / LMG 11437 / NCIMB 947 / NCTC 947) (Lactobacillus brevis), this protein is Serine hydroxymethyltransferase.